The chain runs to 462 residues: Hyaluronidase-1 (462 aa).

Residues 1-52 (MLGLTQHAQKVWRMKPFSPEVSPGSSPATAGHLLRISTLFLTLLELAQVCRG) form the signal peptide. Disulfide bonds link Cys71-Cys361 and Cys235-Cys249. N-linked (GlcNAc...) asparagine glycosylation is found at Asn98 and Asn127. Catalysis depends on Glu159, which acts as the Proton donor. Asn244, Asn265, and Asn378 each carry an N-linked (GlcNAc...) asparagine glycan. Disulfide bonds link Cys386-Cys397, Cys391-Cys446, and Cys448-Cys457. In terms of domain architecture, EGF-like spans 446–457 (CRCYRGWRGKWC).

The protein belongs to the glycosyl hydrolase 56 family. In terms of tissue distribution, highly expressed in liver, kidney, lung and skin.

The protein resides in the secreted. It is found in the lysosome. The enzyme catalyses Random hydrolysis of (1-&gt;4)-linkages between N-acetyl-beta-D-glucosamine and D-glucuronate residues in hyaluronate.. In terms of biological role, may have a role in promoting tumor progression. May block the TGFB1-enhanced cell growth. This is Hyaluronidase-1 (Hyal1) from Mus musculus (Mouse).